Reading from the N-terminus, the 618-residue chain is Protease 4 (618 aa).

Over methionine 1 to glutamate 24 the chain is Cytoplasmic. Residues methionine 25–valine 45 form a helical membrane-spanning segment. Topologically, residues serine 46–arginine 618 are periplasmic. Lysine 209 serves as the catalytic Proton donor/acceptor. The active-site Nucleophile is serine 409.

This sequence belongs to the peptidase S49 family. Homotetramer.

The protein resides in the cell inner membrane. With respect to regulation, inhibited by serine hydrolase inhibitor FP-biotin and by antipain. Its function is as follows. Digests cleaved signal peptides in vitro, its in vivo function is unknown. This activity is necessary to maintain proper secretion of mature proteins across the membrane. This chain is Protease 4 (sppA), found in Escherichia coli (strain K12).